The sequence spans 908 residues: Protein translocase subunit SecA (908 aa).

ATP is bound by residues Q87, 105–109 (GEGKT), and D494. The segment at 871–908 (QEFSGGNLNRSQSNGSSVTVTTSSGGGTERKTSRRRKR) is disordered. A compositionally biased stretch (polar residues) spans 874–884 (SGGNLNRSQSN).

This sequence belongs to the SecA family. Monomer and homodimer. Part of the essential Sec protein translocation apparatus which comprises SecA, SecYEG and auxiliary proteins SecDF. Other proteins may also be involved.

It is found in the cell inner membrane. It localises to the cytoplasm. The enzyme catalyses ATP + H2O + cellular proteinSide 1 = ADP + phosphate + cellular proteinSide 2.. In terms of biological role, part of the Sec protein translocase complex. Interacts with the SecYEG preprotein conducting channel. Has a central role in coupling the hydrolysis of ATP to the transfer of proteins into and across the cell membrane, serving as an ATP-driven molecular motor driving the stepwise translocation of polypeptide chains across the membrane. This chain is Protein translocase subunit SecA, found in Leptospira interrogans serogroup Icterohaemorrhagiae serovar Lai (strain 56601).